The following is a 297-amino-acid chain: Protein-methionine-sulfoxide reductase catalytic subunit MsrP (297 aa).

A signal peptide (tat-type signal) is located at residues 1–35; it reads MLITPEKLYKQRRNFLKLGAGALISSSVLASKLSA. Residues 62 to 63, cysteine 116, threonine 151, asparagine 201, arginine 206, and 217 to 219 contribute to the Mo-molybdopterin site; these read YE and SIK.

Belongs to the MsrP family. Heterodimer of a catalytic subunit (MsrP) and a heme-binding subunit (MsrQ). Mo-molybdopterin is required as a cofactor. In terms of processing, predicted to be exported by the Tat system. The position of the signal peptide cleavage has not been experimentally proven.

It is found in the periplasm. The catalysed reaction is L-methionyl-[protein] + a quinone + H2O = L-methionyl-(S)-S-oxide-[protein] + a quinol. It catalyses the reaction L-methionyl-[protein] + a quinone + H2O = L-methionyl-(R)-S-oxide-[protein] + a quinol. In terms of biological role, part of the MsrPQ system that repairs oxidized periplasmic proteins containing methionine sulfoxide residues (Met-O), using respiratory chain electrons. Thus protects these proteins from oxidative-stress damage caused by reactive species of oxygen and chlorine generated by the host defense mechanisms. MsrPQ is essential for the maintenance of envelope integrity under bleach stress, rescuing a wide series of structurally unrelated periplasmic proteins from methionine oxidation. The catalytic subunit MsrP is non-stereospecific, being able to reduce both (R-) and (S-) diastereoisomers of methionine sulfoxide. The protein is Protein-methionine-sulfoxide reductase catalytic subunit MsrP of Campylobacter jejuni subsp. jejuni serotype O:2 (strain ATCC 700819 / NCTC 11168).